The chain runs to 90 residues: DNA-directed RNA polymerase subunit omega (90 aa).

The protein belongs to the RNA polymerase subunit omega family. In terms of assembly, the RNAP catalytic core consists of 2 alpha, 1 beta, 1 beta' and 1 omega subunit. When a sigma factor is associated with the core the holoenzyme is formed, which can initiate transcription.

The enzyme catalyses RNA(n) + a ribonucleoside 5'-triphosphate = RNA(n+1) + diphosphate. Functionally, promotes RNA polymerase assembly. Latches the N- and C-terminal regions of the beta' subunit thereby facilitating its interaction with the beta and alpha subunits. The chain is DNA-directed RNA polymerase subunit omega from Saccharophagus degradans (strain 2-40 / ATCC 43961 / DSM 17024).